A 178-amino-acid polypeptide reads, in one-letter code: Caveolin-1 (178 aa).

S2 bears the N-acetylserine mark. S2 is modified (phosphoserine). The tract at residues 2-94 (SGGKYVDSEG…WKASFTTFTV (93 aa)) is required for homooligomerization. Residues 2–104 (SGGKYVDSEG…TKYWFYRLLS (103 aa)) lie on the Cytoplasmic side of the membrane. Position 5 is an N6-acetyllysine; alternate (K5). A Glycyl lysine isopeptide (Lys-Gly) (interchain with G-Cter in ubiquitin); alternate cross-link involves residue K5. The residue at position 6 (Y6) is a Phosphotyrosine. The residue at position 9 (S9) is a Phosphoserine. Residue Y14 is modified to Phosphotyrosine; by ABL1. Y25 carries the phosphotyrosine modification. Glycyl lysine isopeptide (Lys-Gly) (interchain with G-Cter in ubiquitin) cross-links involve residues K26, K30, K39, K47, and K57. The interval 82 to 94 (DGIWKASFTTFTV) is interaction with CAVIN3. The helical intramembrane region spans 105–125 (TLFGIPMALIWGIYFAILSFL). The Cytoplasmic segment spans residues 126–178 (HIWAVVPCIKSFLIEIQCIGRVYSIYIHTFCDPLFEAVGKLFSNIRINMQKEI). The interacts with SPRY1, SPRY2, SPRY3 and SPRY4 stretch occupies residues 131–142 (VPCIKSFLIEIQ). 3 S-palmitoyl cysteine lipidation sites follow: C133, C143, and C156. The segment at 149 to 160 (SIYIHTFCDPLF) is interacts with SPRY1, SPRY2, and SPRY4. The interacts with SPRY1, SPRY2, SPRY3 and SPRY4 stretch occupies residues 167-178 (FSNIRINMQKEI).

Belongs to the caveolin family. In terms of assembly, homooligomer. Interacts with GLIPR2. Interacts with NOSTRIN. Interacts with SNAP25 and STX1A. Interacts (via the N-terminus) with DPP4; the interaction is direct. Interacts with CTNNB1, CDH1 and JUP. Interacts with PACSIN2; this interaction induces membrane tubulation. Interacts with SLC7A9. Interacts with BMX and BTK. Interacts with TGFBR1. Interacts with CAVIN3 (via leucine-zipper domain) in a cholesterol-sensitive manner. Interacts with CAVIN1. Interacts with EHD2 in a cholesterol-dependent manner. Forms a ternary complex with UBXN6 and VCP; mediates CAV1 targeting to lysosomes for degradation. Interacts with ABCG1; this interaction regulates ABCG1-mediated cholesterol efflux. Interacts with NEU3; this interaction enhances NEU3 sialidase activity within caveola. Interacts (via C-terminus) with SPRY1, SPRY2 (via C-terminus), SPRY3, and SPRY4. Interacts with IGFBP5; this interaction allows trafficking of IGFBP5 from the plasma membrane to the nucleus. In terms of processing, phosphorylated at Tyr-14 by ABL1 in response to oxidative stress. Post-translationally, ubiquitinated. Undergo monoubiquitination and multi- and/or polyubiquitination. Monoubiquitination of N-terminal lysines promotes integration in a ternary complex with UBXN6 and VCP which promotes oligomeric CAV1 targeting to lysosomes for degradation. Ubiquitinated by ZNRF1; leading to degradation and modulation of the TLR4-mediated immune response.

Its subcellular location is the golgi apparatus membrane. It localises to the cell membrane. The protein resides in the membrane. The protein localises to the caveola. It is found in the membrane raft. Functionally, may act as a scaffolding protein within caveolar membranes. Forms a stable heterooligomeric complex with CAV2 that targets to lipid rafts and drives caveolae formation. Mediates the recruitment of CAVIN proteins (CAVIN1/2/3/4) to the caveolae. Interacts directly with G-protein alpha subunits and can functionally regulate their activity. Involved in the costimulatory signal essential for T-cell receptor (TCR)-mediated T-cell activation. Its binding to DPP4 induces T-cell proliferation and NF-kappa-B activation in a T-cell receptor/CD3-dependent manner. Recruits CTNNB1 to caveolar membranes and may regulate CTNNB1-mediated signaling through the Wnt pathway. Negatively regulates TGFB1-mediated activation of SMAD2/3 by mediating the internalization of TGFBR1 from membrane rafts leading to its subsequent degradation. Binds 20(S)-hydroxycholesterol (20(S)-OHC). In Dasypus novemcinctus (Nine-banded armadillo), this protein is Caveolin-1 (CAV1).